The sequence spans 164 residues: Lipoprotein signal peptidase (164 aa).

3 helical membrane-spanning segments follow: residues 12–32, 70–90, and 102–122; these read WLWL…LILQ, WFFA…MYRS, and ALII…GFVV. Residues aspartate 123 and aspartate 141 contribute to the active site. Residues 137-157 traverse the membrane as a helical segment; that stretch reads FNLADTAICVGAALIVLEGFL.

The protein belongs to the peptidase A8 family.

Its subcellular location is the cell inner membrane. It catalyses the reaction Release of signal peptides from bacterial membrane prolipoproteins. Hydrolyzes -Xaa-Yaa-Zaa-|-(S,diacylglyceryl)Cys-, in which Xaa is hydrophobic (preferably Leu), and Yaa (Ala or Ser) and Zaa (Gly or Ala) have small, neutral side chains.. It functions in the pathway protein modification; lipoprotein biosynthesis (signal peptide cleavage). Its function is as follows. This protein specifically catalyzes the removal of signal peptides from prolipoproteins. This is Lipoprotein signal peptidase from Shigella flexneri.